A 331-amino-acid polypeptide reads, in one-letter code: Glycerophosphodiester phosphodiesterase 1 (331 aa).

Over 1–3 (MWL) the chain is Cytoplasmic. The helical transmembrane segment at 4–24 (WEDQGGLLGPFSFLLLVLLLV) threads the bilayer. Topologically, residues 25–247 (TRSPVNACLL…KPRYDTFWKH (223 aa)) are lumenal. The GP-PDE domain occupies 65 to 331 (ISAIAHRGGS…SMVEDCEPHF (267 aa)). Residues Glu97 and Asp99 each contribute to the Mg(2+) site. Asn168 is a glycosylation site (N-linked (GlcNAc...) asparagine). Asp174 lines the Mg(2+) pocket. Residue Asn198 is glycosylated (N-linked (GlcNAc...) asparagine). A helical transmembrane segment spans residues 248-268 (FIFVMMDILLDWSMHNILWYL). Residues 269 to 331 (CGISAFLMQK…SMVEDCEPHF (63 aa)) are Cytoplasmic-facing.

This sequence belongs to the glycerophosphoryl diester phosphodiesterase family. Interacts with PRAF2. Interacts with RGS16. Mg(2+) serves as cofactor. N-glycosylated. In terms of tissue distribution, widely expressed.

The protein resides in the cell membrane. It is found in the cytoplasmic vesicle membrane. It carries out the reaction sn-glycero-3-phospho-1D-myo-inositol + H2O = myo-inositol + sn-glycerol 3-phosphate + H(+). The enzyme catalyses 1-O-(1Z-octadecenyl)-sn-glycero-3-phospho-(N-5Z,8Z,11Z,14Z-eicosatetraenoyl)-ethanolamine + H2O = 1-O-(1Z-octadecenyl)-sn-glycero-3-phosphate + N-(5Z,8Z,11Z,14Z-eicosatetraenoyl)-ethanolamine + H(+). It catalyses the reaction 1-O-(1Z-octadecenyl)-sn-glycero-3-phospho-(N-9Z-octadecenoyl)-ethanolamine + H2O = 1-O-(1Z-octadecenyl)-sn-glycero-3-phosphate + N-(9Z-octadecenoyl) ethanolamine + H(+). The catalysed reaction is 1-O-(1Z-octadecenyl)-sn-glycero-3-phospho-N-hexadecanoyl-ethanolamine + H2O = 1-O-(1Z-octadecenyl)-sn-glycero-3-phosphate + N-hexadecanoylethanolamine + H(+). It carries out the reaction N-(4Z,7Z,10Z,13Z,16Z,19Z)-docosahexaenoyl-sn-glycero-3-phosphoethanolamine + H2O = N-(4Z,7Z,10Z,13Z,16Z,19Z)-docosahexaenoyl ethanolamine + sn-glycerol 3-phosphate + H(+). The enzyme catalyses N-eicosanoyl-sn-glycero-3-phosphoethanolamine + H2O = N-eicosanoyl ethanolamine + sn-glycerol 3-phosphate + H(+). It catalyses the reaction N-hexadecanoyl-sn-glycero-3-phosphoethanolamine + H2O = N-hexadecanoylethanolamine + sn-glycerol 3-phosphate + H(+). The catalysed reaction is N-(9Z-octadecenoyl)-sn-glycero-3-phosphoethanolamine + H2O = N-(9Z-octadecenoyl) ethanolamine + sn-glycerol 3-phosphate + H(+). It carries out the reaction N-(5Z,8Z,11Z,14Z-eicosatetraenoyl)-sn-glycero-3-phosphoethanolamine + H2O = N-(5Z,8Z,11Z,14Z-eicosatetraenoyl)-ethanolamine + sn-glycerol 3-phosphate + H(+). Its activity is regulated as follows. Inhibited by EDTA, calcium chloride, and zinc chloride. Enhanced by magnesium chloride. Glycerophosphodiester phosphodiesterase activity can be modulated by G-protein signaling pathways. In terms of biological role, hydrolyzes the phosphodiester bond of glycerophosphodiesters such as glycerophosphoinositol (GroPIns) and glycerophosphoethanolamine (GroPEth), to yield a glycerol phosphate and an alcohol. Hydrolyzes glycerophospho-N-acylethanolamines to N-acylethanolamines in the brain and participates in bioactive N-acylethanolamine biosynthesis such as anandamide (an endocannabinoid), N-palmitoylethanolamine (an anti-inflammatory), and N-oleoylethanolamine (an anorexic). In addition, has a lysophospholipase D activity by hydrolyzing N-acyl-lysoplasmenylethanolamine (N-acyl-lysoPlsEt) to N-acylethanolamine. However lysophospholipase D activity is lower than glycerophosphodiester phosphodiesterase activity. Has little or no activity towards glycerophosphocholine. The chain is Glycerophosphodiester phosphodiesterase 1 from Homo sapiens (Human).